A 185-amino-acid polypeptide reads, in one-letter code: Alkyl hydroperoxide reductase AhpD (185 aa).

Residue cysteine 132 is the Proton donor of the active site. Cysteine 132 and cysteine 135 form a disulfide bridge. Cysteine 135 (cysteine sulfenic acid (-SOH) intermediate) is an active-site residue.

This sequence belongs to the AhpD family.

It carries out the reaction N(6)-[(R)-dihydrolipoyl]-L-lysyl-[lipoyl-carrier protein] + a hydroperoxide = N(6)-[(R)-lipoyl]-L-lysyl-[lipoyl-carrier protein] + an alcohol + H2O. Functionally, antioxidant protein with alkyl hydroperoxidase activity. Required for the reduction of the AhpC active site cysteine residues and for the regeneration of the AhpC enzyme activity. This chain is Alkyl hydroperoxide reductase AhpD, found in Anaeromyxobacter sp. (strain Fw109-5).